Here is a 627-residue protein sequence, read N- to C-terminus: Pheromone B alpha 2 receptor (627 aa).

At 1–7 (MLDPTYP) the chain is on the extracellular side. The chain crosses the membrane as a helical span at residues 8–28 (AFPIFAFLGIVCCLVPLPWHL). The Cytoplasmic segment spans residues 29–35 (QSWNSGT). Residues 36 to 56 (CFLMIWTAVACLNMFVNSIIW) form a helical membrane-spanning segment. The Extracellular segment spans residues 57–69 (KDHAQNVAPVWCE). Residues 70–90 (ISIRITLGASVGIPASSLCIV) form a helical membrane-spanning segment. Residues 91-102 (RRLYSIAKKFRA) lie on the Cytoplasmic side of the membrane. Residues 103–123 (VMVDALICVLFPILYIILQIV) form a helical membrane-spanning segment. Over 124–150 (VQGHRFNILENIGCFPAIINTPLTYPL) the chain is Extracellular. The helical transmembrane segment at 151 to 171 (TFMWPVLIGVISFIYSTLALI) threads the bilayer. Over 172–197 (QFNRHRLQFTQFLHSNSTLSVSRYLR) the chain is Cytoplasmic. A helical transmembrane segment spans residues 198–218 (LMALAMTEMMCTTPMGVFVII). Residues 219 to 260 (LNAKATPVSPYVSWAVTHYGYGRIDQVPAIIWRSNRLLVASY) lie on the Extracellular side of the membrane. Residues 261–281 (ELTRWSSPAIALIFFFYFGFA) form a helical membrane-spanning segment. The Cytoplasmic segment spans residues 282–627 (QEARRNYAAA…ASPRTHRASV (346 aa)). Disordered regions lie at residues 363-405 (LPRP…SSPI), 479-505 (TVPQ…SSSA), and 518-627 (LPST…RASV). The span at 372–387 (SSSGFSSSDSTRFGSS) shows a compositional bias: low complexity. Composition is skewed to polar residues over residues 519-533 (PSTT…SLPT) and 545-555 (SLSQLFGISSM). A compositionally biased stretch (low complexity) spans 569–607 (ATGTASPTTTAPAPASTTIAPASATMAPATTTTAPTTIA).

Belongs to the G-protein coupled receptor 4 family.

The protein resides in the cell membrane. Receptor for the BAP2 pheromone, a prenylated mating factor. The receptor/pheromone interaction may have a role in the fusion of clamp cells. This chain is Pheromone B alpha 2 receptor (BAR2), found in Schizophyllum commune (Split gill fungus).